We begin with the raw amino-acid sequence, 559 residues long: Chromatin assembly factor 1 subunit B (559 aa).

WD repeat units follow at residues 11 to 54 (HNKE…DGKA), 64 to 103 (RHTK…EPEQ), 127 to 166 (GHLE…KISI), 169 to 208 (EHKS…VAFN), 228 to 279 (FHDD…RPIA), 299 to 340 (ELRP…PFGY), and 344 to 385 (IHYH…IPLK). A disordered region spans residues 386–559 (EKPVLNMRTP…NKGGTESLDP (174 aa)). Thr-394 carries the post-translational modification Phosphothreonine. The residue at position 409 (Ser-409) is a Phosphoserine. Thr-419 carries the phosphothreonine modification. Ser-429 is modified (phosphoserine). Residues 430–444 (PGTTPPQARQAPAPT) show a composition bias toward low complexity. Thr-433 bears the Phosphothreonine mark. Ser-458 is modified (phosphoserine). Residues 469–495 (LQPSSQNTKAHPSRRVTLNTLQAWSKT) are compositionally biased toward polar residues. Lys-494 carries the N6-acetyllysine modification. Phosphothreonine occurs at positions 495, 509, 521, and 531. The segment covering 509 to 526 (TPPSSVPTSVISTPSTEE) has biased composition (low complexity). Residue Ser-538 is modified to Phosphoserine. Residues 541 to 552 (ELKRPRLDENKG) show a composition bias toward basic and acidic residues.

This sequence belongs to the WD repeat HIR1 family. In terms of assembly, subunit of the CAF-1 complex that contains RBBP4, CHAF1B and CHAF1A. CHAF1A binds directly to CHAF1B. Only minor amounts of RBBP4 are complexed with CHAF1A and CHAF1B in G1 phase. In G2 and S phase also monomeric CHAF1B is detected. Interacts with histones H3.1, H3.2 and H3.1t. In terms of processing, differentially phosphorylated during cell cycle. During mitosis the p60 subunit of inactive CAF-1 is hyperphosphorylated and displaced into the cytosol. Progressivly dephosphorylated from G1 to S and G2 phase. Phosphorylated p60 is recruited to chromatin undergoing DNA repair after UV irradiation in G1, S or G2 phases.

The protein resides in the nucleus. It localises to the cytoplasm. Its function is as follows. Acts as a component of the histone chaperone complex chromatin assembly factor 1 (CAF-1), which assembles histone octamers onto DNA during replication and repair. CAF-1 performs the first step of the nucleosome assembly process, bringing newly synthesized histones H3 and H4 to replicating DNA; histones H2A/H2B can bind to this chromatin precursor subsequent to DNA replication to complete the histone octamer. The polypeptide is Chromatin assembly factor 1 subunit B (Homo sapiens (Human)).